The sequence spans 451 residues: Phenylalanine-4-hydroxylase (451 aa).

At serine 16 the chain carries Phosphoserine; by PKA. In terms of domain architecture, ACT spans 35–113 (SLIFSLKEEV…TVHELSRDKK (79 aa)). Fe cation contacts are provided by histidine 284, histidine 289, and glutamate 329.

It belongs to the biopterin-dependent aromatic amino acid hydroxylase family. In terms of assembly, homodimer and homotetramer. Requires Fe(2+) as cofactor. In terms of processing, phosphorylation at Ser-16 increases basal activity and facilitates activation by the substrate phenylalanine.

It carries out the reaction (6R)-L-erythro-5,6,7,8-tetrahydrobiopterin + L-phenylalanine + O2 = (4aS,6R)-4a-hydroxy-L-erythro-5,6,7,8-tetrahydrobiopterin + L-tyrosine. The protein operates within amino-acid degradation; L-phenylalanine degradation; acetoacetate and fumarate from L-phenylalanine: step 1/6. N-terminal region of PAH is thought to contain allosteric binding sites for phenylalanine and to constitute an 'inhibitory' domain that regulates the activity of a catalytic domain in the C-terminal portion of the molecule. Functionally, catalyzes the hydroxylation of L-phenylalanine to L-tyrosine. In Bos taurus (Bovine), this protein is Phenylalanine-4-hydroxylase (PAH).